The primary structure comprises 263 residues: Tryptophan synthase alpha chain (263 aa).

Residues E47 and D58 each act as proton acceptor in the active site.

This sequence belongs to the TrpA family. As to quaternary structure, tetramer of two alpha and two beta chains.

The protein resides in the plastid. The protein localises to the chloroplast. The catalysed reaction is (1S,2R)-1-C-(indol-3-yl)glycerol 3-phosphate + L-serine = D-glyceraldehyde 3-phosphate + L-tryptophan + H2O. Its pathway is amino-acid biosynthesis; L-tryptophan biosynthesis; L-tryptophan from chorismate: step 5/5. The alpha subunit is responsible for the aldol cleavage of indoleglycerol phosphate to indole and glyceraldehyde 3-phosphate. The sequence is that of Tryptophan synthase alpha chain from Pyropia yezoensis (Susabi-nori).